A 459-amino-acid polypeptide reads, in one-letter code: MVEGKIVQCIGAVIDVEFPRESMPKIYDALILEGSELTLEVQQQLGDGVVRTICLGASDGLRRGVVVKNTGNPISVPVGKPTLGRIMDVLGRPIDEAGPIESENKRSIHQKAPAFDELSPSTELLETGIKVIDLICPFAKGGKVGLFGGAGVGKTVNMMELINNIAKEHGGYSVFAGVGERTREGNDFYHEMKDSNVLDKVALVYGQMNEPPGNRLRVALTGLTMAEHFRDEGLDVLFFVDNIYRFTLAGTEVSALLGRMPSAVGYQPTLAEEMGKLQERITSTKKGSITSVQAVYVPADDLTDPSPATTFGHLDATVVLSRDIASLGIYPAVDPLDSTSRQIDPNVIGEEHYSITRRVQQTLQRYKELRDIIAILGMDELSPEDKLSVARARKIQRFLSQPFHVAEVFTGSPGKYVPLKETIRGFKMIVDGECDHLPEQAFYMVGTIDEAFEKAKKIQ.

148–155 (GGAGVGKT) contacts ATP.

The protein belongs to the ATPase alpha/beta chains family. F-type ATPases have 2 components, CF(1) - the catalytic core - and CF(0) - the membrane proton channel. CF(1) has five subunits: alpha(3), beta(3), gamma(1), delta(1), epsilon(1). CF(0) has three main subunits: a(1), b(2) and c(9-12). The alpha and beta chains form an alternating ring which encloses part of the gamma chain. CF(1) is attached to CF(0) by a central stalk formed by the gamma and epsilon chains, while a peripheral stalk is formed by the delta and b chains.

The protein resides in the cell inner membrane. The catalysed reaction is ATP + H2O + 4 H(+)(in) = ADP + phosphate + 5 H(+)(out). Functionally, produces ATP from ADP in the presence of a proton gradient across the membrane. The catalytic sites are hosted primarily by the beta subunits. The chain is ATP synthase subunit beta from Burkholderia mallei (strain NCTC 10229).